A 187-amino-acid polypeptide reads, in one-letter code: UPF0398 protein SH1465 (187 aa).

It belongs to the UPF0398 family.

The chain is UPF0398 protein SH1465 from Staphylococcus haemolyticus (strain JCSC1435).